The primary structure comprises 49 residues: Large ribosomal subunit protein bL33 (49 aa).

Belongs to the bacterial ribosomal protein bL33 family.

This Pseudothermotoga lettingae (strain ATCC BAA-301 / DSM 14385 / NBRC 107922 / TMO) (Thermotoga lettingae) protein is Large ribosomal subunit protein bL33.